Here is a 586-residue protein sequence, read N- to C-terminus: Eukaryotic translation initiation factor 3 subunit D (586 aa).

Disordered stretches follow at residues E16–F37 and K104–S176. The span at G108–A131 shows a compositional bias: gly residues. The segment covering G162 to E174 has biased composition (basic and acidic residues). The segment at S301–P315 is RNA gate. The disordered stretch occupies residues A563 to E586. The span at F566 to E577 shows a compositional bias: acidic residues.

Belongs to the eIF-3 subunit D family. In terms of assembly, component of the eukaryotic translation initiation factor 3 (eIF-3) complex.

It localises to the cytoplasm. In terms of biological role, mRNA cap-binding component of the eukaryotic translation initiation factor 3 (eIF-3) complex, which is involved in protein synthesis of a specialized repertoire of mRNAs and, together with other initiation factors, stimulates binding of mRNA and methionyl-tRNAi to the 40S ribosome. The eIF-3 complex specifically targets and initiates translation of a subset of mRNAs involved in cell proliferation. In the eIF-3 complex, eif3d specifically recognizes and binds the 7-methylguanosine cap of a subset of mRNAs. The sequence is that of Eukaryotic translation initiation factor 3 subunit D from Aspergillus clavatus (strain ATCC 1007 / CBS 513.65 / DSM 816 / NCTC 3887 / NRRL 1 / QM 1276 / 107).